The following is a 361-amino-acid chain: Mannose-1-phosphate guanyltransferase (361 aa).

Residue Thr-153 is modified to Phosphothreonine. Lys-244 participates in a covalent cross-link: Glycyl lysine isopeptide (Lys-Gly) (interchain with G-Cter in ubiquitin).

This sequence belongs to the transferase hexapeptide repeat family.

The protein localises to the cytoplasm. It catalyses the reaction alpha-D-mannose 1-phosphate + GTP + H(+) = GDP-alpha-D-mannose + diphosphate. It functions in the pathway nucleotide-sugar biosynthesis; GDP-alpha-D-mannose biosynthesis; GDP-alpha-D-mannose from alpha-D-mannose 1-phosphate (GTP route): step 1/1. Its function is as follows. Involved in cell wall synthesis where it is required for glycosylation. Involved in cell cycle progression through cell-size checkpoint. This Saccharomyces cerevisiae (strain ATCC 204508 / S288c) (Baker's yeast) protein is Mannose-1-phosphate guanyltransferase (PSA1).